The following is a 210-amino-acid chain: Thymidylate kinase (210 aa).

Position 10–17 (10–17) interacts with ATP; the sequence is GPEGAGKS.

It belongs to the thymidylate kinase family.

The catalysed reaction is dTMP + ATP = dTDP + ADP. Phosphorylation of dTMP to form dTDP in both de novo and salvage pathways of dTTP synthesis. The sequence is that of Thymidylate kinase from Pseudomonas paraeruginosa (strain DSM 24068 / PA7) (Pseudomonas aeruginosa (strain PA7)).